Consider the following 298-residue polypeptide: Probable 2-(5''-triphosphoribosyl)-3'-dephosphocoenzyme-A synthase 2 (298 aa).

Belongs to the CitG/MdcB family.

It catalyses the reaction 3'-dephospho-CoA + ATP = 2'-(5''-triphospho-alpha-D-ribosyl)-3'-dephospho-CoA + adenine. The chain is Probable 2-(5''-triphosphoribosyl)-3'-dephosphocoenzyme-A synthase 2 from Salmonella paratyphi A (strain ATCC 9150 / SARB42).